Here is a 156-residue protein sequence, read N- to C-terminus: Small ribosomal subunit protein uS7 (156 aa).

The protein belongs to the universal ribosomal protein uS7 family. In terms of assembly, part of the 30S ribosomal subunit. Contacts proteins S9 and S11.

In terms of biological role, one of the primary rRNA binding proteins, it binds directly to 16S rRNA where it nucleates assembly of the head domain of the 30S subunit. Is located at the subunit interface close to the decoding center, probably blocks exit of the E-site tRNA. In Bifidobacterium longum (strain NCC 2705), this protein is Small ribosomal subunit protein uS7.